We begin with the raw amino-acid sequence, 200 residues long: UPF0637 protein LCABL_14170 (200 aa).

The protein belongs to the UPF0637 family.

The protein is UPF0637 protein LCABL_14170 of Lacticaseibacillus casei (strain BL23) (Lactobacillus casei).